Consider the following 338-residue polypeptide: Beta-ketoacyl-[acyl-carrier-protein] synthase III (338 aa).

Residues C119 and H261 contribute to the active site. Positions 262-266 are ACP-binding; it reads QANQR. N291 is an active-site residue.

This sequence belongs to the thiolase-like superfamily. FabH family. Homodimer.

The protein resides in the cytoplasm. The catalysed reaction is malonyl-[ACP] + acetyl-CoA + H(+) = 3-oxobutanoyl-[ACP] + CO2 + CoA. The protein operates within lipid metabolism; fatty acid biosynthesis. Functionally, catalyzes the condensation reaction of fatty acid synthesis by the addition to an acyl acceptor of two carbons from malonyl-ACP. Catalyzes the first condensation reaction which initiates fatty acid synthesis and may therefore play a role in governing the total rate of fatty acid production. Possesses both acetoacetyl-ACP synthase and acetyl transacylase activities. Its substrate specificity determines the biosynthesis of branched-chain and/or straight-chain of fatty acids. The polypeptide is Beta-ketoacyl-[acyl-carrier-protein] synthase III (Prochlorococcus marinus (strain SARG / CCMP1375 / SS120)).